A 154-amino-acid polypeptide reads, in one-letter code: Peptide deformylase (154 aa).

The Fe cation site is built by Cys-90 and His-132. Residue Glu-133 is part of the active site. His-136 lines the Fe cation pocket.

It belongs to the polypeptide deformylase family. It depends on Fe(2+) as a cofactor.

It catalyses the reaction N-terminal N-formyl-L-methionyl-[peptide] + H2O = N-terminal L-methionyl-[peptide] + formate. In terms of biological role, removes the formyl group from the N-terminal Met of newly synthesized proteins. Requires at least a dipeptide for an efficient rate of reaction. N-terminal L-methionine is a prerequisite for activity but the enzyme has broad specificity at other positions. The protein is Peptide deformylase of Halothermothrix orenii (strain H 168 / OCM 544 / DSM 9562).